The sequence spans 596 residues: NADH-quinone oxidoreductase subunit C/D (596 aa).

An NADH dehydrogenase I subunit C region spans residues 1 to 186; the sequence is MTDLTAQDAA…DPFELTKAKQ (186 aa). The interval 210–596 is NADH dehydrogenase I subunit D; the sequence is DFMFLNLGPN…IDFVMSDVDR (387 aa).

The protein in the N-terminal section; belongs to the complex I 30 kDa subunit family. It in the C-terminal section; belongs to the complex I 49 kDa subunit family. In terms of assembly, NDH-1 is composed of 13 different subunits. Subunits NuoB, CD, E, F, and G constitute the peripheral sector of the complex.

It localises to the cell inner membrane. The enzyme catalyses a quinone + NADH + 5 H(+)(in) = a quinol + NAD(+) + 4 H(+)(out). NDH-1 shuttles electrons from NADH, via FMN and iron-sulfur (Fe-S) centers, to quinones in the respiratory chain. The immediate electron acceptor for the enzyme in this species is believed to be ubiquinone. Couples the redox reaction to proton translocation (for every two electrons transferred, four hydrogen ions are translocated across the cytoplasmic membrane), and thus conserves the redox energy in a proton gradient. The sequence is that of NADH-quinone oxidoreductase subunit C/D from Salmonella dublin (strain CT_02021853).